The primary structure comprises 310 residues: DDRGK domain-containing protein 1 (310 aa).

A helical transmembrane segment spans residues 1-21 (MAAIIYLAIAAVASILLFVAV). The Cytoplasmic segment spans residues 22–310 (KLLSTDTKTE…DSPAEISVNA (289 aa)). Disordered stretches follow at residues 38–85 (VGEL…DEYQ) and 110–162 (KAEK…LKEE). The segment covering 52-70 (PRARARRGLRNKTNRSKTQ) has biased composition (basic residues). Over residues 76–85 (DYDDYDDEYQ) the composition is skewed to acidic residues.

Belongs to the DDRGK1 family.

The protein localises to the endoplasmic reticulum membrane. Functionally, substrate adapter for ufmylation, the covalent attachment of the ubiquitin-like modifier UFM1 to substrate proteins. In Trichoplax adhaerens (Trichoplax reptans), this protein is DDRGK domain-containing protein 1.